We begin with the raw amino-acid sequence, 272 residues long: Sulfate transporter CysZ (272 aa).

Transmembrane regions (helical) follow at residues 29-49 (FVIMPIVLNTILLCGLFWLFI), 66-86 (WLSFLSVILLTLSILTILLLF), 148-168 (IIALFLLSFIPLVGQTIVPVL), and 219-239 (FVPVINLLIMPVAVCGATLMW).

It belongs to the CysZ family.

The protein localises to the cell inner membrane. Its function is as follows. High affinity, high specificity proton-dependent sulfate transporter, which mediates sulfate uptake. Provides the sulfur source for the cysteine synthesis pathway. The sequence is that of Sulfate transporter CysZ from Haemophilus influenzae (strain PittGG).